Here is a 609-residue protein sequence, read N- to C-terminus: Kelch-like protein 20 (609 aa).

The region spanning 68-135 (CDVVLVVGAK…AYTSQITVEE (68 aa)) is the BTB domain. One can recognise a BACK domain in the interval 170–272 (CLGIRAFADT…SPKFLVGTVG (103 aa)). Kelch repeat units follow at residues 319–365 (VLFA…VLDD), 367–413 (LYAV…VLGG), 414–460 (FLYA…VLGG), 462–507 (LYAV…VYQD), 509–554 (IYAV…VVNG), and 556–601 (LMAV…VIKM).

Component of the BCR(KLHL20) E3 ubiquitin ligase complex, at least composed of CUL3, KLHL20 and RBX1. Interacts with PDZ-RhoGEF/ARHGEF11, DAPK1, PML and CORO7. Interacts with F-actin. Interacts with IFN-gamma (IFNG). Interacts (via kelch repeats) with IVNS1ABP (via kelch repeats); this interaction blocks the assembly of CUL3-KLHL20 complex.

It is found in the cytoplasm. The protein localises to the perinuclear region. The protein resides in the nucleus. Its subcellular location is the golgi apparatus. It localises to the trans-Golgi network. It is found in the cell projection. The protein localises to the axon. The protein resides in the dendrite. It participates in protein modification; protein ubiquitination. Substrate-specific adapter of a BCR (BTB-CUL3-RBX1) E3 ubiquitin-protein ligase complex involved in interferon response and anterograde Golgi to endosome transport. The BCR(KLHL20) E3 ubiquitin ligase complex mediates the ubiquitination of DAPK1, leading to its degradation by the proteasome, thereby acting as a negative regulator of apoptosis. The BCR(KLHL20) E3 ubiquitin ligase complex also specifically mediates 'Lys-33'-linked ubiquitination. Involved in anterograde Golgi to endosome transport by mediating 'Lys-33'-linked ubiquitination of CORO7, promoting interaction between CORO7 and EPS15, thereby facilitating actin polymerization and post-Golgi trafficking. Also acts as a regulator of endothelial migration during angiogenesis by controlling the activation of Rho GTPases. The BCR(KLHL20) E3 ubiquitin ligase complex acts as a regulator of neurite outgrowth by mediating ubiquitination and degradation of PDZ-RhoGEF/ARHGEF11. This Bos taurus (Bovine) protein is Kelch-like protein 20 (KLHL20).